The following is a 361-amino-acid chain: G2/mitotic-specific cyclin-B1 (361 aa).

Residues 1-13 (MLRATNNRRTSNN) show a composition bias toward polar residues. The interval 1-33 (MLRATNNRRTSNNVEKDSLQMAKHGNGPLKPVN) is disordered.

It belongs to the cyclin family. Cyclin AB subfamily. As to quaternary structure, interacts with the CDK1 protein kinase to form a serine/threonine kinase holoenzyme complex also known as maturation promoting factor (MPF). The cyclin subunit imparts substrate specificity to the complex. Interacts with E3 ubiquitin-protein ligase etc-1. In terms of processing, ubiquitinated by etc-1 likely during meiosis, resulting in its degradation.

It localises to the cytoplasm. Essential for the control of the cell cycle at the G2/M (mitosis) transition. This is G2/mitotic-specific cyclin-B1 (cyb-1) from Caenorhabditis elegans.